A 333-amino-acid polypeptide reads, in one-letter code: GTPase Obg (333 aa).

In terms of domain architecture, Obg spans 4–162 (GNFVDYVKIY…MDVILELKVL (159 aa)). The OBG-type G domain maps to 163–332 (ADVGLVGFPN…LKDKLWKMLN (170 aa)). GTP-binding positions include 169 to 176 (GFPNAGKS), 194 to 198 (FTTLK), 216 to 219 (DIPG), 283 to 286 (SKCD), and 313 to 315 (SSV). Mg(2+) contacts are provided by serine 176 and threonine 196.

The protein belongs to the TRAFAC class OBG-HflX-like GTPase superfamily. OBG GTPase family. As to quaternary structure, monomer. Mg(2+) is required as a cofactor.

It localises to the cytoplasm. Functionally, an essential GTPase which binds GTP, GDP and possibly (p)ppGpp with moderate affinity, with high nucleotide exchange rates and a fairly low GTP hydrolysis rate. Plays a role in control of the cell cycle, stress response, ribosome biogenesis and in those bacteria that undergo differentiation, in morphogenesis control. This is GTPase Obg from Flavobacterium johnsoniae (strain ATCC 17061 / DSM 2064 / JCM 8514 / BCRC 14874 / CCUG 350202 / NBRC 14942 / NCIMB 11054 / UW101) (Cytophaga johnsonae).